A 460-amino-acid chain; its full sequence is Cysteine--tRNA ligase (460 aa).

Zn(2+) is bound at residue cysteine 29. Positions 31–41 (ATPQSSPHIGH) match the 'HIGH' region motif. Positions 212, 237, and 241 each coordinate Zn(2+). The 'KMSKS' region motif lies at 268 to 272 (KMSKS). Residue lysine 271 participates in ATP binding.

It belongs to the class-I aminoacyl-tRNA synthetase family. As to quaternary structure, monomer. Zn(2+) is required as a cofactor.

Its subcellular location is the cytoplasm. The catalysed reaction is tRNA(Cys) + L-cysteine + ATP = L-cysteinyl-tRNA(Cys) + AMP + diphosphate. The chain is Cysteine--tRNA ligase from Corynebacterium glutamicum (strain R).